Consider the following 335-residue polypeptide: tRNA N6-adenosine threonylcarbamoyltransferase (335 aa).

Fe cation is bound by residues His-111 and His-115. Substrate contacts are provided by residues 133–137, Asp-166, Gly-179, and Asn-276; that span reads LISGG. Asp-301 lines the Fe cation pocket.

Belongs to the KAE1 / TsaD family. It depends on Fe(2+) as a cofactor.

The protein localises to the cytoplasm. It carries out the reaction L-threonylcarbamoyladenylate + adenosine(37) in tRNA = N(6)-L-threonylcarbamoyladenosine(37) in tRNA + AMP + H(+). Functionally, required for the formation of a threonylcarbamoyl group on adenosine at position 37 (t(6)A37) in tRNAs that read codons beginning with adenine. Is involved in the transfer of the threonylcarbamoyl moiety of threonylcarbamoyl-AMP (TC-AMP) to the N6 group of A37, together with TsaE and TsaB. TsaD likely plays a direct catalytic role in this reaction. The sequence is that of tRNA N6-adenosine threonylcarbamoyltransferase from Wolbachia pipientis wMel.